A 446-amino-acid chain; its full sequence is MGGFTGQSEVSVSQGIRMMFYVLYPNETSFKNVEDVPDYVEKATVYFFIMLILEMIISWAWKGQPLRINDGLTSLSAGVFSRLPDVAFRGVEVASYIYIWNNYRLIELPWDSPWTWWLTFLGVDFGYYWFHRMAHEVNIMWAGHQTHHSSEDYNLTTALRQSFIQKYFSWMFYWPMAFCIPPSVFAVHIQFNLLYQFWIHTELINNLGPLEWILNTPSHHRVHHGRNPYCIDSNYAGTLIIWDRMFGTFVPEKEKVLYGLTHPINTFEPFQVQIQHCVLIWNTFWATPGFSNKLSVIFKGPGWGPGKPRLGLPEEIPQITGEEKPYDPKSAGYLQCYGMMHFLLLLAVYVHMFEAKLILTPATLLLRIGYILLTLTSLGFIFDKRPKAALLETIRCLLFLFLQKYDYMTTDVPYLRIINEVTFSICTAAWGLKAVKEAIERTKKLE.

The next 2 membrane-spanning stretches (helical) occupy residues 43–63 and 110–130; these read ATVY…AWKG and WDSP…YYWF. Positions 118–248 constitute a Fatty acid hydroxylase domain; that stretch reads LTFLGVDFGY…LIIWDRMFGT (131 aa). A Histidine box-1 motif is present at residues 131–135; the sequence is HRMAH. Residues 144-148 carry the Histidine box-2 motif; the sequence is HQTHH. Residues 167–187 traverse the membrane as a helical segment; it reads YFSWMFYWPMAFCIPPSVFAV. Residues 220–224 carry the Histidine box-3 motif; sequence HRVHH. 3 helical membrane passes run 339–359, 362–382, and 412–434; these read MMHF…KLIL, ATLL…GFIF, and VPYL…GLKA.

The protein belongs to the sterol desaturase family. TMEM195 subfamily. The cofactor is Fe cation.

Its subcellular location is the endoplasmic reticulum membrane. The enzyme catalyses 1-O-(1,2-saturated-alkyl)-sn-glycerol + (6R)-L-erythro-5,6,7,8-tetrahydrobiopterin + O2 = a 1-(1-hydroxyalkyl)-sn-glycerol + (6R)-L-erythro-6,7-dihydrobiopterin + H2O. Glyceryl-ether monooxygenase that cleaves the O-alkyl bond of ether lipids. Ether lipids are essential components of brain membranes. The sequence is that of Alkylglycerol monooxygenase (agmo) from Xenopus tropicalis (Western clawed frog).